A 161-amino-acid polypeptide reads, in one-letter code: Protein-export protein SecB (161 aa).

This sequence belongs to the SecB family. In terms of assembly, homotetramer, a dimer of dimers. One homotetramer interacts with 1 SecA dimer.

It localises to the cytoplasm. One of the proteins required for the normal export of preproteins out of the cell cytoplasm. It is a molecular chaperone that binds to a subset of precursor proteins, maintaining them in a translocation-competent state. It also specifically binds to its receptor SecA. The chain is Protein-export protein SecB from Afipia carboxidovorans (strain ATCC 49405 / DSM 1227 / KCTC 32145 / OM5) (Oligotropha carboxidovorans).